The chain runs to 159 residues: Ecotin (159 aa).

Positions 1–22 (MRPTPMTAILALTLAAAAPAMA) are cleaved as a signal peptide. The cysteines at positions 68 and 105 are disulfide-linked.

Belongs to the protease inhibitor I11 (ecotin) family. In terms of assembly, homodimer.

The protein localises to the periplasm. Its function is as follows. General inhibitor of family S1 serine proteases. This Pseudomonas putida (strain GB-1) protein is Ecotin.